Consider the following 664-residue polypeptide: Metal-nicotianamine transporter YSL2 (664 aa).

14 helical membrane passes run 31–51 (ITVR…VICL), 55–75 (LTTG…FVFL), 103–123 (CAVA…LLGL), 147–167 (GVGW…VVLV), 209–229 (GFIK…FYSG), 268–288 (LVNL…WPLI), 314–334 (FICI…ILFF), 378–398 (IPLW…IIAI), 409–429 (FVLV…YGAG), 457–477 (VVAG…SADL), 496–516 (VAQA…FFLF), 549–569 (SALP…AVAA), 594–614 (FLVG…VYVW), and 629–649 (VASG…LLAL).

Belongs to the YSL (TC 2.A.67.2) family. As to expression, expressed in roots, leaves and weakly in shoots. Restricted to the veins, to the central cylinder of the young roots and to the pericycle and the endodermis cells facing the meta-xylem tubes in older roots. Expressed in the vasculature of sepals, petals, anthers, stigma and siliques, but not in developing seeds or in meristematic zones.

Its subcellular location is the cell membrane. May be involved in the lateral transport of nicotianamine-chelated metals in the vasculature. This is Metal-nicotianamine transporter YSL2 (YSL2) from Arabidopsis thaliana (Mouse-ear cress).